Here is a 377-residue protein sequence, read N- to C-terminus: Putative F-box protein At1g70380 (377 aa).

Positions 3–48 (NTSFETLALDMQIEILARLPLKYLMRCMCVSKKWASLIRGEDFRSA) constitute an F-box domain.

The chain is Putative F-box protein At1g70380 from Arabidopsis thaliana (Mouse-ear cress).